The following is a 296-amino-acid chain: Homoserine kinase (296 aa).

92–102 (PQSRGLGSSAA) contributes to the ATP binding site.

Belongs to the GHMP kinase family. Homoserine kinase subfamily.

Its subcellular location is the cytoplasm. It catalyses the reaction L-homoserine + ATP = O-phospho-L-homoserine + ADP + H(+). The protein operates within amino-acid biosynthesis; L-threonine biosynthesis; L-threonine from L-aspartate: step 4/5. Catalyzes the ATP-dependent phosphorylation of L-homoserine to L-homoserine phosphate. In Cutibacterium acnes (strain DSM 16379 / KPA171202) (Propionibacterium acnes), this protein is Homoserine kinase.